The sequence spans 430 residues: Gamma-glutamyl phosphate reductase (430 aa).

This sequence belongs to the gamma-glutamyl phosphate reductase family.

It localises to the cytoplasm. The enzyme catalyses L-glutamate 5-semialdehyde + phosphate + NADP(+) = L-glutamyl 5-phosphate + NADPH + H(+). It participates in amino-acid biosynthesis; L-proline biosynthesis; L-glutamate 5-semialdehyde from L-glutamate: step 2/2. Functionally, catalyzes the NADPH-dependent reduction of L-glutamate 5-phosphate into L-glutamate 5-semialdehyde and phosphate. The product spontaneously undergoes cyclization to form 1-pyrroline-5-carboxylate. This Methylococcus capsulatus (strain ATCC 33009 / NCIMB 11132 / Bath) protein is Gamma-glutamyl phosphate reductase.